The following is a 591-amino-acid chain: L-fucose isomerase (591 aa).

Active-site proton acceptor residues include E337 and D361. Residues E337, D361, and H528 each contribute to the Mn(2+) site.

This sequence belongs to the L-fucose isomerase family. In terms of assembly, homohexamer. It depends on Mn(2+) as a cofactor.

The protein resides in the cytoplasm. It catalyses the reaction L-fucose = L-fuculose. The protein operates within carbohydrate degradation; L-fucose degradation; L-lactaldehyde and glycerone phosphate from L-fucose: step 1/3. Converts the aldose L-fucose into the corresponding ketose L-fuculose. This chain is L-fucose isomerase, found in Citrobacter koseri (strain ATCC BAA-895 / CDC 4225-83 / SGSC4696).